A 544-amino-acid chain; its full sequence is MSKEIKFGNDSRSKMLNGVNILADAVKITLGPKGRNVVIDKSYGAPQITKDGVTVAKEIELEDKFENMGAQMVKDVASQTNDAAGDGTTTATVLAQAIIADGLKAVAAGMNPMDLKRGIDQTVKAAVAELKKLSTPCSDSKAITQVGTISANSDHEIGEIIARAMQKVGNQGVITVEEGQGLETELDVVEGMQFDRGYLSPYFMTNHESGTVELENPYILLVDKKIGNIRELLPTLEAVAKASKPLLIIAEDVEGEALATLVVNNMRGIVKVCAVKAPGFGDRRKAMLQDIATLTGGTVISEEIGLDMEKVQLEDLGQAKRIVINKDETTIIDGIGDESVINARVSQIKQQIEASTSDYDKEKLQERSAKLAGGVAVIKVGASTEVEMKEKKDRVDDALHATRAAVEEGVVAGGGVALVRVAAILKGLTGENEDQNVGIRVALRAMEAPLRQIVENCGEEASVVANNVRQGEGNYGYNATTGEYGDMLEMGIIDPTKVARSALQFAASVAALMITTECMITDRPVAASAAAPDMGGMGGMGGMM.

Residues 29-32, lysine 50, 86-90, glycine 414, and aspartate 494 contribute to the ATP site; these read TLGP and DGTTT.

This sequence belongs to the chaperonin (HSP60) family. In terms of assembly, forms a cylinder of 14 subunits composed of two heptameric rings stacked back-to-back. Interacts with the co-chaperonin GroES.

The protein resides in the cytoplasm. The catalysed reaction is ATP + H2O + a folded polypeptide = ADP + phosphate + an unfolded polypeptide.. In terms of biological role, together with its co-chaperonin GroES, plays an essential role in assisting protein folding. The GroEL-GroES system forms a nano-cage that allows encapsulation of the non-native substrate proteins and provides a physical environment optimized to promote and accelerate protein folding. This chain is Chaperonin GroEL 2, found in Psychromonas ingrahamii (strain DSM 17664 / CCUG 51855 / 37).